The primary structure comprises 647 residues: Type II methyltransferase M.FokI (647 aa).

Short sequence motifs (adenine-specific methylase) lie at residues 218 to 221 (DPPY) and 548 to 551 (DPPY).

This sequence belongs to the N(4)/N(6)-methyltransferase family. In terms of assembly, monomer.

The catalysed reaction is a 2'-deoxyadenosine in DNA + S-adenosyl-L-methionine = an N(6)-methyl-2'-deoxyadenosine in DNA + S-adenosyl-L-homocysteine + H(+). Functionally, an alpha subtype methylase that recognizes the asymmetric double-stranded sequence 5'-GGATG-3', methylates A-3 of both strands, and protects the DNA from cleavage by the FokI endonuclease. The protein is Type II methyltransferase M.FokI of Planomicrobium okeanokoites (Planococcus okeanokoites).